The following is a 543-amino-acid chain: Allantoate permease (543 aa).

The Cytoplasmic segment spans residues 1-80 (MSADASTNSN…PEEDRKLRWK (80 aa)). Residues 81 to 97 (IDYCMFPLMCILYAVQF) form a helical membrane-spanning segment. The Extracellular segment spans residues 98–123 (MDKISTSSAAVMGLRTDLKMHGDQYS). A helical membrane pass occupies residues 124-145 (WVTSAFYFGYLFMNLGPVQFIF). At 146–154 (QRTSHMSKM) the chain is on the cytoplasmic side. A helical membrane pass occupies residues 155–171 (LAVFIVIWGMLLALHAA). The Extracellular portion of the chain corresponds to 172 to 178 (PTVKYPS). Residues 179–200 (FIVLRVLLGCAESVVTPCFTII) form a helical membrane-spanning segment. The Cytoplasmic portion of the chain corresponds to 201-213 (TAQYWKTEEQFTR). A helical transmembrane segment spans residues 214 to 237 (VSIWFGMNGLGSILINAIAYGVYI). Over 238 to 248 (HQDSYAIKGWR) the chain is Extracellular. Residues 249–269 (TLFVITGVITIFIGILIFLWI) traverse the membrane as a helical segment. The Cytoplasmic segment spans residues 270–317 (PDDPSKARFLSKREKLMVVQRIRSNQQGFGNHEIKKYQIIEALKDVRT). The helical transmembrane segment at 318–342 (WLYFLFTVSSNIPNGGISSFMSILL) threads the bilayer. At 343-352 (NSDFGYSSKE) the chain is on the extracellular side. A helical membrane pass occupies residues 353–377 (TLLMGLPTGAVELVGCPLFGILAVY). The Cytoplasmic segment spans residues 378–389 (AANKKIPFWKYK). Residues 390-411 (LSWAIFAAVLALIASCMLGFAT) form a helical membrane-spanning segment. Topologically, residues 412–417 (NSKKAR) are extracellular. The chain crosses the membrane as a helical span at residues 418-435 (LAGAYLWYISPVSFICVL). Residues 436–453 (SNISANSSGYSKKWTVSS) lie on the Cytoplasmic side of the membrane. Residues 454–472 (INLVAYAAANLAGPQTFIA) form a helical membrane-spanning segment. At 473–482 (KQAPKYHGAK) the chain is on the extracellular side. The helical transmembrane segment at 483 to 504 (VAMVVCYAVMIVLLSILLIVNL) threads the bilayer. Topologically, residues 505–543 (RENKRRDKIAAERGFPEETENLEFSDLTDFENPNFRYTL) are cytoplasmic.

This sequence belongs to the major facilitator superfamily. Allantoate permease family.

The protein localises to the membrane. In terms of biological role, component of the allantoate transport system. The protein is Allantoate permease (DAL5) of Saccharomyces cerevisiae (strain ATCC 204508 / S288c) (Baker's yeast).